The following is a 291-amino-acid chain: 4-hydroxy-tetrahydrodipicolinate synthase (291 aa).

Residue threonine 47 participates in pyruvate binding. The active-site Proton donor/acceptor is the tyrosine 134. Catalysis depends on lysine 162, which acts as the Schiff-base intermediate with substrate. Isoleucine 205 lines the pyruvate pocket.

Belongs to the DapA family. Homotetramer; dimer of dimers.

The protein resides in the cytoplasm. It catalyses the reaction L-aspartate 4-semialdehyde + pyruvate = (2S,4S)-4-hydroxy-2,3,4,5-tetrahydrodipicolinate + H2O + H(+). It participates in amino-acid biosynthesis; L-lysine biosynthesis via DAP pathway; (S)-tetrahydrodipicolinate from L-aspartate: step 3/4. Functionally, catalyzes the condensation of (S)-aspartate-beta-semialdehyde [(S)-ASA] and pyruvate to 4-hydroxy-tetrahydrodipicolinate (HTPA). This is 4-hydroxy-tetrahydrodipicolinate synthase from Methanospirillum hungatei JF-1 (strain ATCC 27890 / DSM 864 / NBRC 100397 / JF-1).